Reading from the N-terminus, the 398-residue chain is Nicotinate phosphoribosyltransferase 2 (398 aa).

A Phosphohistidine; by autocatalysis modification is found at His224.

It belongs to the NAPRTase family. Transiently phosphorylated on a His residue during the reaction cycle. Phosphorylation strongly increases the affinity for substrates and increases the rate of nicotinate D-ribonucleotide production. Dephosphorylation regenerates the low-affinity form of the enzyme, leading to product release.

The catalysed reaction is nicotinate + 5-phospho-alpha-D-ribose 1-diphosphate + ATP + H2O = nicotinate beta-D-ribonucleotide + ADP + phosphate + diphosphate. It participates in cofactor biosynthesis; NAD(+) biosynthesis; nicotinate D-ribonucleotide from nicotinate: step 1/1. In terms of biological role, catalyzes the synthesis of beta-nicotinate D-ribonucleotide from nicotinate and 5-phospho-D-ribose 1-phosphate at the expense of ATP. The protein is Nicotinate phosphoribosyltransferase 2 of Pseudomonas aeruginosa (strain ATCC 15692 / DSM 22644 / CIP 104116 / JCM 14847 / LMG 12228 / 1C / PRS 101 / PAO1).